A 291-amino-acid chain; its full sequence is ATP synthase gamma chain (291 aa).

This sequence belongs to the ATPase gamma chain family. F-type ATPases have 2 components, CF(1) - the catalytic core - and CF(0) - the membrane proton channel. CF(1) has five subunits: alpha(3), beta(3), gamma(1), delta(1), epsilon(1). CF(0) has three main subunits: a, b and c.

The protein resides in the cell inner membrane. In terms of biological role, produces ATP from ADP in the presence of a proton gradient across the membrane. The gamma chain is believed to be important in regulating ATPase activity and the flow of protons through the CF(0) complex. The protein is ATP synthase gamma chain of Rhodopseudomonas palustris (strain ATCC BAA-98 / CGA009).